The chain runs to 449 residues: Phosphoglucosamine mutase (449 aa).

The Phosphoserine intermediate role is filled by S101. The Mg(2+) site is built by S101, D243, D245, and D247. Phosphoserine is present on S101.

The protein belongs to the phosphohexose mutase family. Mg(2+) is required as a cofactor. Post-translationally, activated by phosphorylation.

The catalysed reaction is alpha-D-glucosamine 1-phosphate = D-glucosamine 6-phosphate. In terms of biological role, catalyzes the conversion of glucosamine-6-phosphate to glucosamine-1-phosphate. The chain is Phosphoglucosamine mutase from Syntrophobacter fumaroxidans (strain DSM 10017 / MPOB).